The following is a 180-amino-acid chain: ATP synthase subunit delta (180 aa).

Belongs to the ATPase delta chain family. In terms of assembly, F-type ATPases have 2 components, F(1) - the catalytic core - and F(0) - the membrane proton channel. F(1) has five subunits: alpha(3), beta(3), gamma(1), delta(1), epsilon(1). F(0) has three main subunits: a(1), b(2) and c(10-14). The alpha and beta chains form an alternating ring which encloses part of the gamma chain. F(1) is attached to F(0) by a central stalk formed by the gamma and epsilon chains, while a peripheral stalk is formed by the delta and b chains.

The protein localises to the cell membrane. In terms of biological role, f(1)F(0) ATP synthase produces ATP from ADP in the presence of a proton or sodium gradient. F-type ATPases consist of two structural domains, F(1) containing the extramembraneous catalytic core and F(0) containing the membrane proton channel, linked together by a central stalk and a peripheral stalk. During catalysis, ATP synthesis in the catalytic domain of F(1) is coupled via a rotary mechanism of the central stalk subunits to proton translocation. Its function is as follows. This protein is part of the stalk that links CF(0) to CF(1). It either transmits conformational changes from CF(0) to CF(1) or is implicated in proton conduction. This Lactobacillus delbrueckii subsp. bulgaricus (strain ATCC BAA-365 / Lb-18) protein is ATP synthase subunit delta.